The primary structure comprises 371 residues: UDP-N-acetylglucosamine--N-acetylmuramyl-(pentapeptide) pyrophosphoryl-undecaprenol N-acetylglucosamine transferase (371 aa).

UDP-N-acetyl-alpha-D-glucosamine contacts are provided by residues 15–17, N126, R169, S197, and Q298; that span reads TGG.

It belongs to the glycosyltransferase 28 family. MurG subfamily.

It localises to the cell inner membrane. The catalysed reaction is di-trans,octa-cis-undecaprenyl diphospho-N-acetyl-alpha-D-muramoyl-L-alanyl-D-glutamyl-meso-2,6-diaminopimeloyl-D-alanyl-D-alanine + UDP-N-acetyl-alpha-D-glucosamine = di-trans,octa-cis-undecaprenyl diphospho-[N-acetyl-alpha-D-glucosaminyl-(1-&gt;4)]-N-acetyl-alpha-D-muramoyl-L-alanyl-D-glutamyl-meso-2,6-diaminopimeloyl-D-alanyl-D-alanine + UDP + H(+). The protein operates within cell wall biogenesis; peptidoglycan biosynthesis. In terms of biological role, cell wall formation. Catalyzes the transfer of a GlcNAc subunit on undecaprenyl-pyrophosphoryl-MurNAc-pentapeptide (lipid intermediate I) to form undecaprenyl-pyrophosphoryl-MurNAc-(pentapeptide)GlcNAc (lipid intermediate II). This chain is UDP-N-acetylglucosamine--N-acetylmuramyl-(pentapeptide) pyrophosphoryl-undecaprenol N-acetylglucosamine transferase, found in Paramagnetospirillum magneticum (strain ATCC 700264 / AMB-1) (Magnetospirillum magneticum).